Reading from the N-terminus, the 325-residue chain is Tagatose 1,6-diphosphate aldolase 1 (325 aa).

The protein belongs to the aldolase LacD family.

It catalyses the reaction D-tagatofuranose 1,6-bisphosphate = D-glyceraldehyde 3-phosphate + dihydroxyacetone phosphate. The protein operates within carbohydrate metabolism; D-tagatose 6-phosphate degradation; D-glyceraldehyde 3-phosphate and glycerone phosphate from D-tagatose 6-phosphate: step 2/2. In Streptococcus mutans serotype c (strain ATCC 700610 / UA159), this protein is Tagatose 1,6-diphosphate aldolase 1 (lacD1).